The chain runs to 64 residues: Large ribosomal subunit protein bL33 (64 aa).

The protein belongs to the bacterial ribosomal protein bL33 family.

The chain is Large ribosomal subunit protein bL33 from Gloeothece citriformis (strain PCC 7424) (Cyanothece sp. (strain PCC 7424)).